Consider the following 198-residue polypeptide: Probable GTP-binding protein EngB (198 aa).

Positions Asn21 to Gly195 constitute an EngB-type G domain. GTP-binding positions include Gly29–Ser36, Gly56–Leu60, Asp81–Gly84, Thr151–Asp154, and Val174–Asn176. Mg(2+) contacts are provided by Ser36 and Thr58.

The protein belongs to the TRAFAC class TrmE-Era-EngA-EngB-Septin-like GTPase superfamily. EngB GTPase family. The cofactor is Mg(2+).

Its function is as follows. Necessary for normal cell division and for the maintenance of normal septation. This Campylobacter jejuni subsp. jejuni serotype O:6 (strain 81116 / NCTC 11828) protein is Probable GTP-binding protein EngB.